The sequence spans 301 residues: Vomeronasal type-1 receptor 4 (301 aa).

At 1-5 (MASRY) the chain is on the extracellular side. The chain crosses the membrane as a helical span at residues 6 to 26 (VAVGMILSQTVVGVLGSFSVL). The Cytoplasmic portion of the chain corresponds to 27-48 (LHYLSFYCTGCRLRSTDLIVKH). A helical transmembrane segment spans residues 49-69 (LIVANFLALRCKGVPQTMAAF). At 70 to 88 (GVRYFLNALGCKLVFYLHR) the chain is on the extracellular side. Residues 89–109 (VGRGVSIGTTCLLSVFQVITV) form a helical membrane-spanning segment. Residues 110–126 (SSRKSRWAKLKEKAPKH) lie on the Cytoplasmic side of the membrane. A helical transmembrane segment spans residues 127–147 (VGFSVLLCWIVCMLVNIIFPM). The Extracellular portion of the chain corresponds to 148–185 (YVTGKWNYTNITVNEDLGYCSGGGNNKIAQTLRAMLLS). N-linked (GlcNAc...) asparagine glycans are attached at residues N154 and N157. A helical membrane pass occupies residues 186 to 206 (FPDVLCLGLMLWVSSSMVCIL). Residues 207–234 (HRHKQRVQHIDRSNLSPRASPENRATQS) lie on the Cytoplasmic side of the membrane. The helical transmembrane segment at 235–255 (ILILVSTFVSSYTLSCLFQVC) threads the bilayer. Over 256-264 (MALLDNPNS) the chain is Extracellular. A helical membrane pass occupies residues 265–285 (LLVNTSALMSVCFPTLSPFVL). Residues 286–301 (MSCDPSVYRFCFAWKR) are Cytoplasmic-facing.

This sequence belongs to the G-protein coupled receptor 1 family.

It localises to the cell membrane. Putative pheromone receptor. The protein is Vomeronasal type-1 receptor 4 (VN1R4) of Homo sapiens (Human).